The primary structure comprises 173 residues: MKTWYMVVVIGFLATLVQTSLALKEEDCEVCVKTVRRFAESLDDSTKKDYKQIETAFKKFCKTQKNKEHRFCYYLGGLEESATGILNELSKPLSWSMPAEKICEKLKKKDAQICDLRYEKQIDLNSVDLKKLKVRDLKKILNDWDESCDGCLEKGDFIKRIEELKPKYSRSEL.

Positions 1 to 22 are cleaved as a signal peptide; that stretch reads MKTWYMVVVIGFLATLVQTSLA. Disulfide bonds link cysteine 28/cysteine 114, cysteine 31/cysteine 103, cysteine 61/cysteine 72, and cysteine 148/cysteine 151.

The protein belongs to the ARMET family.

The protein resides in the secreted. Its function is as follows. Required during the maturation of the embryonic nervous system for maintenance of neuronal and cuticular connectivity. Essential for maintenance of dopaminergic neurons and dopamine levels. In Drosophila yakuba (Fruit fly), this protein is Mesencephalic astrocyte-derived neurotrophic factor homolog.